A 145-amino-acid polypeptide reads, in one-letter code: Globin (145 aa).

Ser2 is subject to N-acetylserine. The Globin domain maps to 2–145 (SLSAAEADLV…IVAALKAAGK (144 aa)). Residue His96 coordinates heme b.

Belongs to the globin family. Monomer.

In Aplysia kurodai (Kuroda's sea hare), this protein is Globin.